Consider the following 728-residue polypeptide: MSPAPAATQAPVSVSLFDLSTDAPVLQGLRLVSHFPEEALAQSLQTSCPGSEEQISPERRPFQGALDISEKLFCSTCDQVFQNHQEQREHYKLDWHRFNLKQRLKDKPLLSALDFEKQSSTGDLSSISGSEDSDSDSEEDLQILDEERADLEKPTRPQGFHPHRVLFQNAQGQFLYAYRCVLGPRHASASTYCVVPLEESELLLQNLQTGGPRDCVVLMAAAGHFAGAIFQGREVLTHKTFHRYTVRAKRGTAQGLRDARGAAAHSAGASLRRYNEAALYKEVRDLLAGPAWAKALEEAGTILLRAPRSGRSLFFGGREAPLRRGDPRLWDIPLATRRPTFQELQRVVHKLTTLHIHGEDPRETSRLDLPQTHRKRVRERKVIEEESKVPSDENEALGQNKEAPTQGSESEGGDGSQVELELVEVTLGTLDLREFDVFPKQRRRKRNKRERKQDLESGAQMTLSQQPKEDEALSGSAPLRPPLDEATSPCQSELWDVLLAACRAGDVGMLKDRLTASPLHPGVLPLLSAPLGSGGFTLLHAAAAAGRGSVVRLLLEAGADPTVQDSRARPPYTVAADRSTRNEFRRFMEKNPDAYDYSKAQVPGPLTAEMEARQATRRREQKAARRHREEQQRKQQEQEKQEQEEQQRFAALSDREKRALAAERRLAAQLGALNPQTPDPAITVSNIPRCWSCGMSLQGLVPFHYLDFSFCSTRCLRDHRCQAGKPSS.

The C2H2-type zinc-finger motif lies at 72–96 (LFCSTCDQVFQNHQEQREHYKLDWH). Residues 120-130 (STGDLSSISGS) show a composition bias toward low complexity. Residues 120 to 140 (STGDLSSISGSEDSDSDSEED) form a disordered region. Acidic residues predominate over residues 131–140 (EDSDSDSEED). The region spanning 211 to 354 (GPRDCVVLMA…QRVVHKLTTL (144 aa)) is the VLRF1 domain. The active site involves Gln254. Ser266 carries the post-translational modification Phosphoserine. 2 disordered regions span residues 359 to 416 (EDPR…GDGS) and 442 to 487 (RRRK…DEAT). The span at 380–391 (RKVIEEESKVPS) shows a compositional bias: basic and acidic residues. The stretch at 493-526 (ELWDVLLAACRAGDVGMLKDRLTASPLHPGVLPL) is one ANK 1 repeat. At Ser533 the chain carries Phosphoserine. An ANK 2 repeat occupies 534–563 (GGFTLLHAAAAAGRGSVVRLLLEAGADPTV). The interval 589–656 (EKNPDAYDYS…QRFAALSDRE (68 aa)) is disordered. At Thr607 the chain carries Phosphothreonine. Residues 608-659 (AEMEARQATRRREQKAARRHREEQQRKQQEQEKQEQEEQQRFAALSDREKRA) adopt a coiled-coil conformation. The span at 610-656 (MEARQATRRREQKAARRHREEQQRKQQEQEKQEQEEQQRFAALSDRE) shows a compositional bias: basic and acidic residues. The interval 654–666 (DREKRALAAERRL) is VCP/p97-interacting motif (VIM).

The protein belongs to the ANKZF1/VMS1 family. In terms of assembly, interacts (via VIM motif) with VCP.

It is found in the cytoplasm. Endonuclease that cleaves polypeptidyl-tRNAs downstream of the ribosome-associated quality control (RQC) pathway to release incompletely synthesized polypeptides for degradation. The RQC pathway disassembles aberrantly stalled translation complexes to recycle or degrade the constituent parts. ANKZF1 acts downstream disassembly of stalled ribosomes and specifically cleaves off the terminal 3'-CCA nucleotides universal to all tRNAs from polypeptidyl-tRNAs, releasing (1) ubiquitinated polypeptides from 60S ribosomal subunit for degradation and (2) cleaved tRNAs. ANKZF1-cleaved tRNAs are then repaired and recycled by ELAC1 and TRNT1. Also plays a role in the cellular response to hydrogen peroxide and in the maintenance of mitochondrial integrity under conditions of cellular stress. The sequence is that of tRNA endonuclease ANKZF1 (ANKZF1) from Bos taurus (Bovine).